The chain runs to 527 residues: Glucose-6-phosphate isomerase (527 aa).

E323 functions as the Proton donor in the catalytic mechanism. Active-site residues include H352 and K454.

This sequence belongs to the GPI family.

The protein localises to the cytoplasm. The enzyme catalyses alpha-D-glucose 6-phosphate = beta-D-fructose 6-phosphate. Its pathway is carbohydrate biosynthesis; gluconeogenesis. The protein operates within carbohydrate degradation; glycolysis; D-glyceraldehyde 3-phosphate and glycerone phosphate from D-glucose: step 2/4. Catalyzes the reversible isomerization of glucose-6-phosphate to fructose-6-phosphate. The chain is Glucose-6-phosphate isomerase from Prochlorococcus marinus (strain MIT 9312).